The chain runs to 63 residues: Large ribosomal subunit protein bL28 (63 aa).

This sequence belongs to the bacterial ribosomal protein bL28 family.

The protein is Large ribosomal subunit protein bL28 of Coprothermobacter proteolyticus (strain ATCC 35245 / DSM 5265 / OCM 4 / BT).